A 290-amino-acid chain; its full sequence is ATP synthase subunit a (290 aa).

A run of 6 helical transmembrane segments spans residues 44–64 (AFHV…ILLF), 104–124 (VIAP…AIDL), 161–181 (LSVF…GGFI), 194–214 (ILVQ…TLVA), 233–253 (VFIL…GMGV), and 260–280 (AVFH…LTIV).

This sequence belongs to the ATPase A chain family. As to quaternary structure, F-type ATPases have 2 components, CF(1) - the catalytic core - and CF(0) - the membrane proton channel. CF(1) has five subunits: alpha(3), beta(3), gamma(1), delta(1), epsilon(1). CF(0) has three main subunits: a(1), b(2) and c(9-12). The alpha and beta chains form an alternating ring which encloses part of the gamma chain. CF(1) is attached to CF(0) by a central stalk formed by the gamma and epsilon chains, while a peripheral stalk is formed by the delta and b chains.

The protein localises to the cell inner membrane. Key component of the proton channel; it plays a direct role in the translocation of protons across the membrane. This is ATP synthase subunit a from Pseudomonas fluorescens (strain ATCC BAA-477 / NRRL B-23932 / Pf-5).